Reading from the N-terminus, the 777-residue chain is MKTYTYSKQDLSFIEQLSQAYCKDPFSYLGLHQAGDVSVIRVFLPEATTVKILSAVGQILSEALKIDDSGLFVAQLAQQYSSLNYRLRVGYSLAEIDLEDPYRFTSSLLPMDNWLLAEGTHLRPYEILGAHLKTQEGVSGVHFSVWAPNARRVSVVGDFNYWDGRVNPMRFHAESGIWDIFLPNVEKGALYKFEILDSNGNIRLKSDPYAFASQFRPDTASVVTGLPEKIEVDAKLRHANDPDQPISIYEVHLGSWRRHLENNYWLNYEEIANELIPYVKDMGFTHIELLPITEYPFDGSWGYQPTGLYSPTSRFGSPEDLRTLIRKAHEAGINVILDWVVGHFPTDSHGLTEFDGSHLYEHQDPREGYHQDWNTLIFNYGRHEVFNYLSSNALYWTERFGIDGLRVDAVSSMIYRDYSRKDGEWIPNQYGGRENLEALDFLRRTNRMLKKEGHGAVVIAEESTSFAGITHSPEENGVGFDYKWNMGWMNDTLRYMSLDPIYRQYHHDWMTFGMMYQYSEKFVLPLSHDEVVHGKCSILGKMSGDCWQKFANLRAYYGYMWGYPGKKLLFMGNEFAQGREWNYNESLDWFLLGEQGGGWHKGVLNWVRDLNRTYQKYPALYQLDYDPAGFEWLVVDDWQQSVFAFERKAKNGESVIVVSNFTPVVRHNYRIGVRQDGTYTEILNSDAAYYEGSNVGNYGEIECEAIESHGKPFSIELSIPPLSTIFIACQPKPKEAVEAEQDIVKMAEVAMQKALKPTKKTVSVKAKAHKKAHKNKK.

Residue aspartate 408 is the Nucleophile of the active site. Glutamate 461 (proton donor) is an active-site residue.

The protein belongs to the glycosyl hydrolase 13 family. GlgB subfamily. Monomer.

The catalysed reaction is Transfers a segment of a (1-&gt;4)-alpha-D-glucan chain to a primary hydroxy group in a similar glucan chain.. The protein operates within glycan biosynthesis; glycogen biosynthesis. Its function is as follows. Catalyzes the formation of the alpha-1,6-glucosidic linkages in glycogen by scission of a 1,4-alpha-linked oligosaccharide from growing alpha-1,4-glucan chains and the subsequent attachment of the oligosaccharide to the alpha-1,6 position. This chain is 1,4-alpha-glucan branching enzyme GlgB, found in Actinobacillus pleuropneumoniae serotype 5b (strain L20).